The sequence spans 315 residues: Voltage-dependent calcium channel gamma-3 subunit (315 aa).

4 helical membrane-spanning segments follow: residues 8–28, 104–124, 135–155, and 181–201; these read VQMLITTVGAFAAFSLMTIAV, SSVFPILSVTLLFFGGLCVAA, ILSAGIFFVSAGLSNIIGIIV, and FGAFSFIIAEIVGVVAVHIYI. The disordered stretch occupies residues 232 to 252; it reads RRRSSSRSTEPRSRDLSPISK. Phosphoserine is present on Ser248.

It belongs to the PMP-22/EMP/MP20 family. CACNG subfamily. The L-type calcium channel is composed of five subunits: alpha-1, alpha-2/delta, beta and gamma. Acts as an auxiliary subunit for AMPA-selective glutamate receptors (AMPARs). Found in a complex with GRIA1, GRIA2, GRIA3, GRIA4, CNIH2, CNIH3, CACNG2, CACNG4, CACNG5, CACNG7 and CACNG8. Interacts with AP4M1 and GRIA1; associates GRIA1 with the adaptor protein complex 4 (AP-4) to target GRIA1 to the somatodendritic compartment of neurons.

It is found in the membrane. In terms of biological role, regulates the trafficking and gating properties of AMPA-selective glutamate receptors (AMPARs). Promotes their targeting to the cell membrane and synapses and modulates their gating properties by slowing their rates of activation, deactivation and desensitization. Does not show subunit-specific AMPA receptor regulation and regulates all AMPAR subunits. Thought to stabilize the calcium channel in an inactivated (closed) state. This Bos taurus (Bovine) protein is Voltage-dependent calcium channel gamma-3 subunit (CACNG3).